The primary structure comprises 150 residues: Large-conductance mechanosensitive channel (150 aa).

2 helical membrane-spanning segments follow: residues 14 to 34 (VIDL…VTSF) and 81 to 101 (GVFL…FLVV).

This sequence belongs to the MscL family. In terms of assembly, homopentamer.

It is found in the cell membrane. In terms of biological role, channel that opens in response to stretch forces in the membrane lipid bilayer. May participate in the regulation of osmotic pressure changes within the cell. This Syntrophomonas wolfei subsp. wolfei (strain DSM 2245B / Goettingen) protein is Large-conductance mechanosensitive channel.